Here is a 119-residue protein sequence, read N- to C-terminus: Large ribosomal subunit protein uL22c (119 aa).

The protein belongs to the universal ribosomal protein uL22 family. As to quaternary structure, part of the 50S ribosomal subunit.

The protein resides in the plastid. Its subcellular location is the chloroplast. Its function is as follows. This protein binds specifically to 23S rRNA. In terms of biological role, the globular domain of the protein is located near the polypeptide exit tunnel on the outside of the subunit, while an extended beta-hairpin is found that lines the wall of the exit tunnel in the center of the 70S ribosome. The protein is Large ribosomal subunit protein uL22c (rpl22) of Marchantia polymorpha (Common liverwort).